Reading from the N-terminus, the 603-residue chain is Variable flagella 3 (603 aa).

Residues 169–289 (GGEVSAELRR…TEDLEARDRR (121 aa)) adopt a coiled-coil conformation. A compositionally biased stretch (basic and acidic residues) spans 288-297 (RRMNSTDRIR). 2 disordered regions span residues 288 to 526 (RRMN…PARA) and 539 to 564 (AGRG…SSKS). The segment covering 337–348 (SRSNSRGRGTSS) has biased composition (low complexity). The segment covering 364–380 (PRFDPTEYVRQRKERES) has biased composition (basic and acidic residues). Positions 397-406 (AGTSRASSVV) are enriched in polar residues. Gly residues predominate over residues 486 to 510 (GASGGGAGGWSKFPGGGGGGVGGSG). The segment covering 511 to 520 (QRISSNSPRS) has biased composition (polar residues).

The protein belongs to the CCDC61 family.

It is found in the cytoplasm. Its subcellular location is the cytoskeleton. It localises to the flagellum basal body. Functionally, required for normal flagella and striated fiber formation. This Chlamydomonas reinhardtii (Chlamydomonas smithii) protein is Variable flagella 3.